A 476-amino-acid chain; its full sequence is Lactate utilization protein B (476 aa).

2 4Fe-4S ferredoxin-type domains span residues 304–334 (GTEF…GHSY) and 353–382 (YDEY…LHEL). Positions 313, 316, 319, 323, 366, 369, and 373 each coordinate [4Fe-4S] cluster.

It belongs to the LutB/YkgF family.

Functionally, is involved in L-lactate degradation and allows cells to grow with lactate as the sole carbon source. Has probably a role as an electron transporter during oxidation of L-lactate. In Bacillus velezensis (strain DSM 23117 / BGSC 10A6 / LMG 26770 / FZB42) (Bacillus amyloliquefaciens subsp. plantarum), this protein is Lactate utilization protein B.